We begin with the raw amino-acid sequence, 69 residues long: Putative membrane protein insertion efficiency factor (69 aa).

It belongs to the UPF0161 family.

It localises to the cell inner membrane. In terms of biological role, could be involved in insertion of integral membrane proteins into the membrane. This Geobacter sulfurreducens (strain ATCC 51573 / DSM 12127 / PCA) protein is Putative membrane protein insertion efficiency factor.